The sequence spans 246 residues: MRKPVIAGNWKMNMTCTEAIEYMRVLIPLLKDIPKKDREIVIAPPFTALYPLSEFIRDRNEYLSLSSQNVHWEDSGAYTAEVSPLMLNELSVKCAIVGHSEPRKYFSESDEQINKRAKSAQDHQLIPIVCVGETFQQREMGEAERVIRRQIEQGLEGIEVKRLIVAYEPIWAIGTGKTCEANEANRICGLIRKWIGYEDVIIQYGGSVKSNNIDEIMSMSDIDGVLVGGASLDPTNFARIANYEKI.

A substrate-binding site is contributed by 9 to 11; sequence NWK. Residue His-99 is the Electrophile of the active site. Glu-168 (proton acceptor) is an active-site residue. Substrate-binding positions include Gly-174, Ser-207, and 228-229; that span reads GG.

Belongs to the triosephosphate isomerase family. In terms of assembly, homodimer.

Its subcellular location is the cytoplasm. The enzyme catalyses D-glyceraldehyde 3-phosphate = dihydroxyacetone phosphate. Its pathway is carbohydrate biosynthesis; gluconeogenesis. It functions in the pathway carbohydrate degradation; glycolysis; D-glyceraldehyde 3-phosphate from glycerone phosphate: step 1/1. Functionally, involved in the gluconeogenesis. Catalyzes stereospecifically the conversion of dihydroxyacetone phosphate (DHAP) to D-glyceraldehyde-3-phosphate (G3P). The protein is Triosephosphate isomerase of Prochlorococcus marinus (strain NATL2A).